The sequence spans 328 residues: Malate dehydrogenase (328 aa).

Residue 12–18 coordinates NAD(+); it reads GAAGQIG. 2 residues coordinate substrate: Arg-95 and Arg-101. NAD(+) is bound by residues Asn-108, Gln-115, and 132–134; that span reads VGN. Substrate contacts are provided by Asn-134 and Arg-165. His-190 functions as the Proton acceptor in the catalytic mechanism.

This sequence belongs to the LDH/MDH superfamily. MDH type 2 family.

The catalysed reaction is (S)-malate + NAD(+) = oxaloacetate + NADH + H(+). In terms of biological role, catalyzes the reversible oxidation of malate to oxaloacetate. The sequence is that of Malate dehydrogenase from Polaromonas sp. (strain JS666 / ATCC BAA-500).